A 146-amino-acid polypeptide reads, in one-letter code: Large ribosomal subunit protein bL19 (146 aa).

The protein belongs to the bacterial ribosomal protein bL19 family.

Its function is as follows. This protein is located at the 30S-50S ribosomal subunit interface and may play a role in the structure and function of the aminoacyl-tRNA binding site. The protein is Large ribosomal subunit protein bL19 of Bartonella henselae (strain ATCC 49882 / DSM 28221 / CCUG 30454 / Houston 1) (Rochalimaea henselae).